The sequence spans 349 residues: Isopentenyl-diphosphate delta-isomerase (349 aa).

Residue 6–7 (RK) coordinates substrate. Residues 62-64 (AMT), Ser93, and Asn122 each bind FMN. Position 152 (Gln152) interacts with substrate. Glu153 serves as a coordination point for Mg(2+). Residues Lys184, Thr214, 258–259 (GG), and 280–281 (AG) contribute to the FMN site.

The protein belongs to the IPP isomerase type 2 family. As to quaternary structure, homooctamer. Dimer of tetramers. FMN is required as a cofactor. It depends on NADPH as a cofactor. Requires Mg(2+) as cofactor.

It localises to the cytoplasm. The enzyme catalyses isopentenyl diphosphate = dimethylallyl diphosphate. Its function is as follows. Involved in the biosynthesis of isoprenoids. Catalyzes the 1,3-allylic rearrangement of the homoallylic substrate isopentenyl (IPP) to its allylic isomer, dimethylallyl diphosphate (DMAPP). The polypeptide is Isopentenyl-diphosphate delta-isomerase (Bacillus cereus (strain B4264)).